A 183-amino-acid chain; its full sequence is RNA 2',3'-cyclic phosphodiesterase (183 aa).

H44 functions as the Proton donor in the catalytic mechanism. 2 consecutive short sequence motifs (HXTX) follow at residues 44-47 and 130-133; these read HITL and HMTL. The Proton acceptor role is filled by H130.

This sequence belongs to the 2H phosphoesterase superfamily. ThpR family.

It catalyses the reaction a 3'-end 2',3'-cyclophospho-ribonucleotide-RNA + H2O = a 3'-end 2'-phospho-ribonucleotide-RNA + H(+). Functionally, hydrolyzes RNA 2',3'-cyclic phosphodiester to an RNA 2'-phosphomonoester. The chain is RNA 2',3'-cyclic phosphodiesterase (ytlP) from Bacillus subtilis (strain 168).